Here is a 111-residue protein sequence, read N- to C-terminus: uncharacterized protein (111 aa).

The segment at 43 to 72 is disordered; sequence NGRAEETEADAPLPEEPSLPDLPDLSDLDS. A compositionally biased stretch (low complexity) spans 61–72; that stretch reads LPDLPDLSDLDS.

This is an uncharacterized protein from Homo sapiens (Human).